The primary structure comprises 225 residues: Ribosome maturation factor RimM (225 aa).

One can recognise a PRC barrel domain in the interval 144-225 (ADEFYWVDLI…RIVVDWEADY (82 aa)).

This sequence belongs to the RimM family. As to quaternary structure, binds ribosomal protein uS19.

The protein localises to the cytoplasm. An accessory protein needed during the final step in the assembly of 30S ribosomal subunit, possibly for assembly of the head region. Essential for efficient processing of 16S rRNA. May be needed both before and after RbfA during the maturation of 16S rRNA. It has affinity for free ribosomal 30S subunits but not for 70S ribosomes. This is Ribosome maturation factor RimM from Burkholderia ambifaria (strain MC40-6).